We begin with the raw amino-acid sequence, 570 residues long: Glucan 1,3-beta-glucosidase 2 (570 aa).

Residues asparagine 91, asparagine 116, asparagine 121, asparagine 184, asparagine 203, and asparagine 248 are each glycosylated (N-linked (GlcNAc...) asparagine). The active-site Proton donor is the glutamate 338. Asparagine 364 carries an N-linked (GlcNAc...) asparagine glycan. The active-site Nucleophile is the glutamate 439. N-linked (GlcNAc...) asparagine glycosylation is found at asparagine 525 and asparagine 552.

It belongs to the glycosyl hydrolase 5 (cellulase A) family.

Its subcellular location is the secreted. It catalyses the reaction Successive hydrolysis of beta-D-glucose units from the non-reducing ends of (1-&gt;3)-beta-D-glucans, releasing alpha-glucose.. The chain is Glucan 1,3-beta-glucosidase 2 (exg2) from Schizosaccharomyces pombe (strain 972 / ATCC 24843) (Fission yeast).